Consider the following 747-residue polypeptide: Endoglucanase D (747 aa).

Positions 1–39 (MHSASRTRARTRVRTAVSGLLAATVLAAPLTLVAAPAQA) are cleaved as a signal peptide. Catalysis depends on Glu-208, which acts as the Proton donor. The Nucleophile role is filled by Glu-349. The segment at 456-475 (APTGLRAGTPTASTVPLTWS) is disordered. Fibronectin type-III domains lie at 456–543 (APTG…TAAG) and 552–639 (VPTG…TAPD). Residues 465 to 475 (PTASTVPLTWS) are compositionally biased toward polar residues. The 110-residue stretch at 638-747 (PDPTTGSCAV…TVGGATCTTR (110 aa)) folds into the CBM2 domain.

It belongs to the glycosyl hydrolase 5 (cellulase A) family.

It catalyses the reaction Endohydrolysis of (1-&gt;4)-beta-D-glucosidic linkages in cellulose, lichenin and cereal beta-D-glucans.. It functions in the pathway glycan metabolism; cellulose degradation. The polypeptide is Endoglucanase D (cenD) (Cellulomonas fimi).